Here is a 101-residue protein sequence, read N- to C-terminus: Apolipoprotein C-II (101 aa).

The signal sequence occupies residues 1–22 (MGTRFLLALFLVLLVLGFEVQG). The segment at 66 to 74 (AVDEKLRDM) is lipid binding. The segment at 78–101 (STAAVSTYAGIFTDQVLSMLRGEE) is lipoprotein lipase cofactor.

This sequence belongs to the apolipoprotein C2 family. Post-translationally, proapolipoprotein C-II is synthesized as a sialic acid containing glycoprotein which is subsequently desialylated prior to its proteolytic processing. Proapolipoprotein C-II, the major form found in plasma undergoes proteolytic cleavage of its N-terminal hexapeptide to generate apolipoprotein C-II, which occurs as the minor form in plasma.

It is found in the secreted. In terms of biological role, component of chylomicrons, very low-density lipoproteins (VLDL), low-density lipoproteins (LDL), and high-density lipoproteins (HDL) in plasma. Plays an important role in lipoprotein metabolism as an activator of lipoprotein lipase. Both proapolipoprotein C-II and apolipoprotein C-II can activate lipoprotein lipase. This is Apolipoprotein C-II (APOC2) from Saimiri boliviensis boliviensis (Bolivian squirrel monkey).